Here is a 466-residue protein sequence, read N- to C-terminus: Glutamate-1-semialdehyde 2,1-aminomutase (466 aa).

Lysine 292 is modified (N6-(pyridoxal phosphate)lysine).

It belongs to the class-III pyridoxal-phosphate-dependent aminotransferase family. HemL subfamily. In terms of assembly, homodimer. The cofactor is pyridoxal 5'-phosphate.

It localises to the cytoplasm. The enzyme catalyses (S)-4-amino-5-oxopentanoate = 5-aminolevulinate. The protein operates within porphyrin-containing compound metabolism; protoporphyrin-IX biosynthesis; 5-aminolevulinate from L-glutamyl-tRNA(Glu): step 2/2. In Tropheryma whipplei (strain TW08/27) (Whipple's bacillus), this protein is Glutamate-1-semialdehyde 2,1-aminomutase.